Reading from the N-terminus, the 388-residue chain is Succinate--CoA ligase [ADP-forming] subunit beta (388 aa).

Positions 9–244 (KEIFARYGLP…PTQESELEVK (236 aa)) constitute an ATP-grasp domain. ATP-binding positions include Lys46, 53 to 55 (GRG), Glu99, Thr102, and Glu107. Residues Asn199 and Asp213 each coordinate Mg(2+). Substrate-binding positions include Asn264 and 321-323 (GIL).

The protein belongs to the succinate/malate CoA ligase beta subunit family. Heterotetramer of two alpha and two beta subunits. Mg(2+) serves as cofactor.

The catalysed reaction is succinate + ATP + CoA = succinyl-CoA + ADP + phosphate. It carries out the reaction GTP + succinate + CoA = succinyl-CoA + GDP + phosphate. It functions in the pathway carbohydrate metabolism; tricarboxylic acid cycle; succinate from succinyl-CoA (ligase route): step 1/1. Functionally, succinyl-CoA synthetase functions in the citric acid cycle (TCA), coupling the hydrolysis of succinyl-CoA to the synthesis of either ATP or GTP and thus represents the only step of substrate-level phosphorylation in the TCA. The beta subunit provides nucleotide specificity of the enzyme and binds the substrate succinate, while the binding sites for coenzyme A and phosphate are found in the alpha subunit. The chain is Succinate--CoA ligase [ADP-forming] subunit beta from Persephonella marina (strain DSM 14350 / EX-H1).